The following is a 287-amino-acid chain: Pyridoxal kinase PdxY (287 aa).

Residues Ser10 and 45–46 (TQ) each bind substrate. ATP is bound by residues Asp112, Ala144, Glu149, Lys182, and 209–212 (RPLV). Asp224 contacts substrate.

The protein belongs to the pyridoxine kinase family. PdxY subfamily. As to quaternary structure, homodimer. Mg(2+) is required as a cofactor.

The catalysed reaction is pyridoxal + ATP = pyridoxal 5'-phosphate + ADP + H(+). It participates in cofactor metabolism; pyridoxal 5'-phosphate salvage; pyridoxal 5'-phosphate from pyridoxal: step 1/1. Its function is as follows. Pyridoxal kinase involved in the salvage pathway of pyridoxal 5'-phosphate (PLP). Catalyzes the phosphorylation of pyridoxal to PLP. The sequence is that of Pyridoxal kinase PdxY from Shigella boydii serotype 4 (strain Sb227).